The sequence spans 1080 residues: Origin recognition complex subunit 3 (1080 aa).

3 disordered regions span residues 92-112, 566-701, and 869-902; these read YGIS…DDSS, TIKL…PKRI, and IKNE…ENEQ. The span at 651-661 shows a compositional bias: basic and acidic residues; the sequence is IKSDLECNDND. Residues 662-671 show a composition bias toward acidic residues; that stretch reads KDNDDNDNDI. 2 stretches are compositionally biased toward low complexity: residues 672-688 and 875-896; these read NENN…NSNN and QQQQ…QQQQ.

It belongs to the ORC3 family. In terms of assembly, ORC is composed of six subunits.

The protein localises to the nucleus. Its function is as follows. Component of the origin recognition complex (ORC) that binds origins of replication. DNA-binding is ATP-dependent, however specific DNA sequences that define origins of replication have not been identified so far. ORC is required to assemble the pre-replication complex necessary to initiate DNA replication. This is Origin recognition complex subunit 3 (orcC) from Dictyostelium discoideum (Social amoeba).